The primary structure comprises 392 residues: Arogenate dehydratase/prephenate dehydratase 1, chloroplastic (392 aa).

The N-terminal 48 residues, 1-48 (MALRCFPIWVCPQTTHHRSPLMGLAEFDADKRRRFCLWECSSSASQRA), are a transit peptide targeting the chloroplast. Residues 107 to 282 (RISFQGIPGA…NVTRFLILAR (176 aa)) enclose the Prephenate dehydratase domain. An ACT domain is found at 296-387 (SIVFSLEEGP…SFIRILGCYP (92 aa)).

In terms of tissue distribution, expressed in roots, leaves, stems, flowers and siliques.

It is found in the plastid. It localises to the chloroplast stroma. It carries out the reaction L-arogenate + H(+) = L-phenylalanine + CO2 + H2O. It catalyses the reaction prephenate + H(+) = 3-phenylpyruvate + CO2 + H2O. It participates in amino-acid biosynthesis; L-phenylalanine biosynthesis; L-phenylalanine from L-arogenate: step 1/1. Its pathway is amino-acid biosynthesis; L-phenylalanine biosynthesis; phenylpyruvate from prephenate: step 1/1. Functionally, converts the prephenate produced from the shikimate-chorismate pathway into phenylalanine. Dehydratase that uses arogenate and prephenate as substrates. Utilzes more efficiently arogenate than prephenate. The chain is Arogenate dehydratase/prephenate dehydratase 1, chloroplastic from Arabidopsis thaliana (Mouse-ear cress).